The sequence spans 520 residues: MFAQQYDHSFNDLFNQYVNMETSAADGKDSALSEFDQLFPLDSLSNDCGDLAPTVSTPKCHQSPQPWSNEWSLQYDGPAADHFAFHDTVHPSAISDVNLNHFEVPSRPTATHALSISPSTPPATPRRKPTQSALITPKTIRHRSPNERRSHLRKQSFSPSLMRSSNLSKSRMAYPEAWAQRLQNFSLHNSEDRLPLSPPPSDALIQHENMPTEQIMNQSRDSAEMPPQYDARLYHQSPSVPMQSPSIAMSARQQQHYIAHPSSSALTNSSPSSADDIFSLSHSSDLHSLSSWQSDSLHASSLPFTPDLQGQESQWWSPMPSRVAQQQAAYLASPTPVRHMQNVGSQNDIMQGGLMIQFNPSYDMSADHSFSSNMLPTSSQKFDTSYTSSQVHDISRSSSSLSPKTGTSPRDTHHGSISKPTHRRTHSRKLSSQSMNTPKPAKAPSSSSRGSNKSVSVSFVNFTADDSKKILTGVAPSGSSKTKARREQEARDRRRKLSEAALRAVRSAGGDVEALEAVLC.

Polar residues-rich tracts occupy residues 109-118 (TATHALSISP), 155-165 (QSFSPSLMRSS), and 378-392 (SSQK…SQVH). Disordered regions lie at residues 109–165 (TATH…MRSS), 378–454 (SSQK…SNKS), and 468–496 (KKIL…RRRK). The span at 420 to 429 (PTHRRTHSRK) shows a compositional bias: basic residues. The segment covering 445-454 (SSSSRGSNKS) has biased composition (low complexity).

It belongs to the wetA family.

BrlA, abaA and wetA are pivotal regulators of conidiophore development and conidium maturation. They act individually and together to regulate their own expression and that of numerous other sporulation-specific genes. In Penicillium roqueforti (strain FM164), this protein is Developmental regulatory protein wetA.